We begin with the raw amino-acid sequence, 270 residues long: 4-hydroxy-tetrahydrodipicolinate reductase (270 aa).

Residues glycine 11–methionine 16 and glutamate 37 contribute to the NAD(+) site. Residue arginine 38 coordinates NADP(+). NAD(+) is bound by residues glycine 101–threonine 103 and alanine 125–methionine 128. Histidine 158 serves as the catalytic Proton donor/acceptor. A (S)-2,3,4,5-tetrahydrodipicolinate-binding site is contributed by histidine 159. The active-site Proton donor is lysine 162. (S)-2,3,4,5-tetrahydrodipicolinate is bound at residue glycine 168–threonine 169.

This sequence belongs to the DapB family.

The protein resides in the cytoplasm. The enzyme catalyses (S)-2,3,4,5-tetrahydrodipicolinate + NAD(+) + H2O = (2S,4S)-4-hydroxy-2,3,4,5-tetrahydrodipicolinate + NADH + H(+). The catalysed reaction is (S)-2,3,4,5-tetrahydrodipicolinate + NADP(+) + H2O = (2S,4S)-4-hydroxy-2,3,4,5-tetrahydrodipicolinate + NADPH + H(+). It functions in the pathway amino-acid biosynthesis; L-lysine biosynthesis via DAP pathway; (S)-tetrahydrodipicolinate from L-aspartate: step 4/4. Its function is as follows. Catalyzes the conversion of 4-hydroxy-tetrahydrodipicolinate (HTPA) to tetrahydrodipicolinate. This Shewanella oneidensis (strain ATCC 700550 / JCM 31522 / CIP 106686 / LMG 19005 / NCIMB 14063 / MR-1) protein is 4-hydroxy-tetrahydrodipicolinate reductase.